The following is a 244-amino-acid chain: Ribosomal RNA small subunit methyltransferase NEP1 (244 aa).

The segment at 1 to 34 (MAAPSDGFKPRERSGGEQAQDWDALPPKRPRLGA) is disordered. N-acetylalanine is present on A2. A phosphoserine mark is found at S5 and S14. Residues T176, G201, G206, and 219 to 224 (ISNYPL) contribute to the S-adenosyl-L-methionine site.

It belongs to the class IV-like SAM-binding methyltransferase superfamily. RNA methyltransferase NEP1 family. In terms of assembly, homodimer. Part of the small subunit (SSU) processome, composed of more than 70 proteins and the RNA chaperone small nucleolar RNA (snoRNA) U3.

Its subcellular location is the nucleus. The protein localises to the nucleolus. It carries out the reaction pseudouridine(1248) in human 18S rRNA + S-adenosyl-L-methionine = N(1)-methylpseudouridine(1248) in human 18S rRNA + S-adenosyl-L-homocysteine + H(+). S-adenosyl-L-methionine-dependent pseudouridine N(1)-methyltransferase that methylates pseudouridine at position 1248 (Psi1248) in 18S rRNA. Involved the biosynthesis of the hypermodified N1-methyl-N3-(3-amino-3-carboxypropyl) pseudouridine (m1acp3-Psi) conserved in eukaryotic 18S rRNA. Is not able to methylate uridine at this position. Also has an essential role in 40S ribosomal subunit biogenesis independent on its methyltransferase activity, facilitating the incorporation of ribosomal protein S19 during the formation of pre-ribosomes. Part of the small subunit (SSU) processome, first precursor of the small eukaryotic ribosomal subunit. During the assembly of the SSU processome in the nucleolus, many ribosome biogenesis factors, an RNA chaperone and ribosomal proteins associate with the nascent pre-rRNA and work in concert to generate RNA folding, modifications, rearrangements and cleavage as well as targeted degradation of pre-ribosomal RNA by the RNA exosome. This Homo sapiens (Human) protein is Ribosomal RNA small subunit methyltransferase NEP1.